Consider the following 645-residue polypeptide: Ethylene response sensor 2 (645 aa).

The next 4 helical transmembrane spans lie at leucine 5–alanine 25, valine 54–valine 74, valine 86–phenylalanine 106, and leucine 125–leucine 145. Cysteine 97 and histidine 101 together coordinate Cu cation. Residues aspartate 190 to isoleucine 346 enclose the GAF domain. Positions methionine 389–methionine 623 constitute a Histidine kinase domain.

It belongs to the ethylene receptor family. Heteromer with ETR1. Requires Cu cation as cofactor. In terms of processing, autophosphorylated predominantly on Ser residues. Expressed in etiolated seedlings, leaves, roots and stems. Highly expressed in flowers, stamens, pollen cells, tapetum cells, carpels and ovules.

It is found in the endoplasmic reticulum membrane. In terms of biological role, ethylene receptor related to bacterial two-component regulators. Acts as a redundant negative regulator of ethylene signaling. This is Ethylene response sensor 2 (ERS2) from Arabidopsis thaliana (Mouse-ear cress).